We begin with the raw amino-acid sequence, 155 residues long: MKLLIVAVGQHVPDWAQTAYDDYAKRFPPELKVELKAVKTEPRGSKTVETLYAAERKRIEAAIPRGTRIVVLDERGTNLTTKALAQRLQGWQLEGDDVALIIGGPDGLDPAFRQAAHERIRLSDLTLPHAMVRVLLIEQLYRAWSVNAGHPYHRE.

Residues Leu-72, Gly-103, and 122–127 (LSDLTL) each bind S-adenosyl-L-methionine.

The protein belongs to the RNA methyltransferase RlmH family. As to quaternary structure, homodimer.

It localises to the cytoplasm. It carries out the reaction pseudouridine(1915) in 23S rRNA + S-adenosyl-L-methionine = N(3)-methylpseudouridine(1915) in 23S rRNA + S-adenosyl-L-homocysteine + H(+). Functionally, specifically methylates the pseudouridine at position 1915 (m3Psi1915) in 23S rRNA. The chain is Ribosomal RNA large subunit methyltransferase H from Delftia acidovorans (strain DSM 14801 / SPH-1).